The chain runs to 457 residues: Argininosuccinate lyase (457 aa).

The protein belongs to the lyase 1 family. Argininosuccinate lyase subfamily.

It is found in the cytoplasm. It catalyses the reaction 2-(N(omega)-L-arginino)succinate = fumarate + L-arginine. It functions in the pathway amino-acid biosynthesis; L-arginine biosynthesis; L-arginine from L-ornithine and carbamoyl phosphate: step 3/3. In Escherichia coli O127:H6 (strain E2348/69 / EPEC), this protein is Argininosuccinate lyase.